Consider the following 862-residue polypeptide: MTGRARARARGRARGQETVQHVGAAASQQPGYIPPRPQQSPTEGDLVGRGRQRGMVVGATSKSQELQISAGFQELSLAERGGRRRDFHDLGVNTRQNLDHVKESKTGSSGIIVKLSTNHFRLTSRPQWALYQYHIDYNPLMEARRLRSALLFQHEDLIGRCHAFDGTILFLPKRLQHKVTEVFSQTRNGEHVRITITLTNELPPTSPTCLQFYNIIFRRLLKIMNLQQIGRNYYNPSDPIDIPNHRLVIWPGFTTSILQYENNIMLCTDVSHKVLRSETVLDFMFNLYQQTEEHKFQEQVSKELIGLIVLTKYNNKTYRVDDIDWDQNPKSTFKKADGSEVSFLEYYRKQYNQEITDLKQPVLVSQPKRRRGPGGTLPGPAMLIPELCYLTGLTDKMRNDFNVMKDLAVHTRLTPEQRQREVGRLIDYIHKDDNVQRELRDWGLSFDSNLLSFSGRILQSEKIHQGGKTFDYNPQFADWSKETRGAPLISVKPLDNWLLIYTRRNYEAANSLIQNLFKVTPAMGIQMKKAIMIEVDDRTEAYLRALQQKVTSDTQIVVCLLSSNRKDKYDAIKKYLCTDCPTPSQCVVARTLGKQQTVMAIATKIALQMNCKMGGELWRVDMPLKLAMIVGIDCYHDTTAGRRSIAGFVASINEGMTRWFSRCVFQDRGQELVDGLKVCLQAALRAWSGCNEYMPSRVIVYRDGVGDGQLKTLVNYEVPQFLDCLKSVGRGYNPRLTVIVVKKRVNARFFAQSGGRLQNPLPGTVIDVEVTRPEWYDFFIVSQAVRSGSVSPTHYNVIYDSSGLKPDHIQRLTYKLCHVYYNWPGVIRVPAPCQYAHKLAFLVGQSIHREPNLSLSNRLYYL.

Positions 1–13 (MTGRARARARGRA) are enriched in basic residues. A disordered region spans residues 1–48 (MTGRARARARGRARGQETVQHVGAAASQQPGYIPPRPQQSPTEGDLVG). Arg-14 is subject to Omega-N-methylarginine; by PRMT5; alternate. Symmetric dimethylarginine; by PRMT5; alternate is present on Arg-14. Arg-49 carries the omega-N-methylarginine; by PRMT5 modification. An Omega-N-methylarginine; alternate modification is found at Arg-53. Arg-53 is modified (symmetric dimethylarginine; alternate). A D-box motif is present at residues 218 to 225 (RRLLKIMN). Residues 279-392 (TVLDFMFNLY…LIPELCYLTG (114 aa)) form the PAZ domain. The required for binding 2'-O-methylated 3'-end of piRNAs stretch occupies residues 317–319 (TYR). The residue at position 371 (Arg-371) is an Omega-N-methylarginine; by PRMT5. The interval 480-616 (SKETRGAPLI…LQMNCKMGGE (137 aa)) is MID region. The 293-residue stretch at 556 to 848 (IVVCLLSSNR…LAFLVGQSIH (293 aa)) folds into the Piwi domain. Catalysis depends on residues Asp-633, Glu-671, Asp-703, and His-837.

The protein belongs to the argonaute family. Piwi subfamily. As to quaternary structure, interacts (via Piwi domain) with DICER1, suggesting that it forms ribonucleoprotein RISC complexes; this interaction is regulated by HSP90AB1 activity. Interacts with MAEL, KIF17, PABPC1, PRMT5 and WDR77. Interacts (when methylated on arginine residues) with TDRD1, TDRKH/TDRD2, RNF17/TDRD4, TDRD6, TDRD7 and TDRD9. Interacts with CLOCK. Interacts with MOV10L1. Interacts with ANAPC10; interaction oly takes place following piRNA-binding. Interacts with RNF8; leading to sequester RNF8 in the cytoplasm. Interacts with Tex19.1 and, probably, Tex19.2. Mg(2+) is required as a cofactor. Post-translationally, ubiquitinated by the anaphase promoting complex/cyclosome (APC/C) in late spermatids, leading to its degradation. Ubiquitination only takes place following piRNA-binding in adult testis. Ubiquitination and degradation in late spermatogenesis by APC/C is probably required to release RNF8 from the cytoplasm and promote histone to protamine exchange by RNF8. In terms of processing, arginine methylation by PRMT5 is required for the interaction with Tudor domain-containing protein (TDRD1, TDRKH/TDRD2, RNF17/TDRD4, TDRD6, TDRD7 and TDRD9) and subsequent localization to the meiotic nuage, also named P granule. In terms of tissue distribution, expressed in brain. Expressed in testis, specifically in spermatocytes (at protein level). Only detected in germ lineage cells of adult testis. Expressed in male gonads 2 weeks after birth at the initiation of spermatogenesis, but not expressed in female gonads.

Its subcellular location is the cytoplasm. Functionally, endoribonuclease that plays a central role in postnatal germ cells by repressing transposable elements and preventing their mobilization, which is essential for the germline integrity. Acts via the piRNA metabolic process, which mediates the repression of transposable elements during meiosis by forming complexes composed of piRNAs and Piwi proteins and governs the methylation and subsequent repression of transposons. Directly binds methylated piRNAs, a class of 24 to 30 nucleotide RNAs that are generated by a Dicer-independent mechanism and are primarily derived from transposons and other repeated sequence elements. Strongly prefers a uridine in the first position of their guide (g1U preference, also named 1U-bias). Not involved in the piRNA amplification loop, also named ping-pong amplification cycle. Acts as an endoribonuclease that cleaves transposon messenger RNAs. Besides their function in transposable elements repression, piRNAs are probably involved in other processes during meiosis such as translation regulation. Probable component of some RISC complex, which mediates RNA cleavage and translational silencing. Also plays a role in the formation of chromatoid bodies and is required for some miRNAs stability. Required to sequester RNF8 in the cytoplasm until late spermatogenesis; RNF8 being released upon ubiquitination and degradation of PIWIL1. The polypeptide is Piwi-like protein 1 (Mus musculus (Mouse)).